The primary structure comprises 287 residues: O-ureido-serine racemase (287 aa).

Substrate is bound at residue Asn-20. The active-site Proton donor is the Cys-81. Substrate is bound by residues 82-83 (GN), Asn-167, Asn-200, and 218-219 (EY). Cys-227 (proton acceptor) is an active-site residue. 228-229 (GS) contacts substrate.

This sequence belongs to the diaminopimelate epimerase family. As to quaternary structure, monomer.

It localises to the cytoplasm. It catalyses the reaction O-ureido-L-serine = O-ureido-D-serine. With respect to regulation, inhibited by thiol-inactivating reagents such as iodoacetamide and Hg(2+) ions. Functionally, involved in the biosynthesis of the antibiotic D-cycloserine (DCS), a cyclic structural analog of D-alanine, used as an antitubercular agent. Catalyzes the stereoinversion of O-ureido-L-serine to O-ureido-D-serine. This is O-ureido-serine racemase from Streptomyces lavendulae.